The sequence spans 411 residues: Translation initiation factor 2 subunit gamma (411 aa).

The tr-type G domain occupies glutamine 9 to lysine 203. The interval glycine 18–threonine 25 is G1. 4 residues coordinate Mg(2+): aspartate 21, threonine 25, glycine 46, and serine 48. Aspartate 21–serine 26 is a GTP binding site. Residues glycine 46–arginine 50 form a G2 region. Zn(2+) contacts are provided by cysteine 61, cysteine 64, cysteine 73, and cysteine 76. Residues aspartate 90–glycine 93 form a G3 region. GTP is bound by residues asparagine 146–aspartate 149 and serine 181–histidine 183. A G4 region spans residues asparagine 146–aspartate 149. Residues serine 181–histidine 183 form a G5 region.

Belongs to the TRAFAC class translation factor GTPase superfamily. Classic translation factor GTPase family. EIF2G subfamily. As to quaternary structure, heterotrimer composed of an alpha, a beta and a gamma chain. Mg(2+) serves as cofactor.

It carries out the reaction GTP + H2O = GDP + phosphate + H(+). EIF-2 functions in the early steps of protein synthesis by forming a ternary complex with GTP and initiator tRNA. In Methanocaldococcus jannaschii (strain ATCC 43067 / DSM 2661 / JAL-1 / JCM 10045 / NBRC 100440) (Methanococcus jannaschii), this protein is Translation initiation factor 2 subunit gamma.